The following is a 204-amino-acid chain: Ribosome maturation factor RimP (204 aa).

Positions 176–204 (GNFDESQFDEIEESEGEEADEAEQPPTKH) are disordered. Acidic residues predominate over residues 181–198 (SQFDEIEESEGEEADEAE).

This sequence belongs to the RimP family.

Its subcellular location is the cytoplasm. Functionally, required for maturation of 30S ribosomal subunits. This chain is Ribosome maturation factor RimP, found in Cereibacter sphaeroides (strain KD131 / KCTC 12085) (Rhodobacter sphaeroides).